The primary structure comprises 169 residues: MAETIRIIGIDPGLRRTGWGVIDFSGNRLQFVAAGTLTSDARCDLASRLCQLYKGLTDILHQFMPQEAAVEHVFVNKDATATLKLGQARAIALLAPAQANLPVFEYAPNKVKKSVIGVGHGDKEQIHMMVKVLLPRAEFDSSDAADALALALCHSTHRIGASYHARIMA.

Active-site residues include Asp11, Glu71, and Asp143. The Mg(2+) site is built by Asp11, Glu71, and Asp143.

It belongs to the RuvC family. Homodimer which binds Holliday junction (HJ) DNA. The HJ becomes 2-fold symmetrical on binding to RuvC with unstacked arms; it has a different conformation from HJ DNA in complex with RuvA. In the full resolvosome a probable DNA-RuvA(4)-RuvB(12)-RuvC(2) complex forms which resolves the HJ. Requires Mg(2+) as cofactor.

The protein resides in the cytoplasm. The catalysed reaction is Endonucleolytic cleavage at a junction such as a reciprocal single-stranded crossover between two homologous DNA duplexes (Holliday junction).. The RuvA-RuvB-RuvC complex processes Holliday junction (HJ) DNA during genetic recombination and DNA repair. Endonuclease that resolves HJ intermediates. Cleaves cruciform DNA by making single-stranded nicks across the HJ at symmetrical positions within the homologous arms, yielding a 5'-phosphate and a 3'-hydroxyl group; requires a central core of homology in the junction. The consensus cleavage sequence is 5'-(A/T)TT(C/G)-3'. Cleavage occurs on the 3'-side of the TT dinucleotide at the point of strand exchange. HJ branch migration catalyzed by RuvA-RuvB allows RuvC to scan DNA until it finds its consensus sequence, where it cleaves and resolves the cruciform DNA. This Bartonella henselae (strain ATCC 49882 / DSM 28221 / CCUG 30454 / Houston 1) (Rochalimaea henselae) protein is Crossover junction endodeoxyribonuclease RuvC.